Here is a 298-residue protein sequence, read N- to C-terminus: Lipoyl synthase 1 (298 aa).

7 residues coordinate [4Fe-4S] cluster: Cys34, Cys39, Cys45, Cys60, Cys64, Cys67, and Ser274. The Radical SAM core domain occupies 46 to 263; it reads FYQGTATFLM…RRLGESMGFL (218 aa).

Belongs to the radical SAM superfamily. Lipoyl synthase family. Requires [4Fe-4S] cluster as cofactor.

The protein resides in the cytoplasm. The catalysed reaction is [[Fe-S] cluster scaffold protein carrying a second [4Fe-4S](2+) cluster] + N(6)-octanoyl-L-lysyl-[protein] + 2 oxidized [2Fe-2S]-[ferredoxin] + 2 S-adenosyl-L-methionine + 4 H(+) = [[Fe-S] cluster scaffold protein] + N(6)-[(R)-dihydrolipoyl]-L-lysyl-[protein] + 4 Fe(3+) + 2 hydrogen sulfide + 2 5'-deoxyadenosine + 2 L-methionine + 2 reduced [2Fe-2S]-[ferredoxin]. It participates in protein modification; protein lipoylation via endogenous pathway; protein N(6)-(lipoyl)lysine from octanoyl-[acyl-carrier-protein]: step 2/2. In terms of biological role, catalyzes the radical-mediated insertion of two sulfur atoms into the C-6 and C-8 positions of the octanoyl moiety bound to the lipoyl domains of lipoate-dependent enzymes, thereby converting the octanoylated domains into lipoylated derivatives. This Thermosynechococcus vestitus (strain NIES-2133 / IAM M-273 / BP-1) protein is Lipoyl synthase 1.